Reading from the N-terminus, the 129-residue chain is Small ribosomal subunit protein uS11 (129 aa).

This sequence belongs to the universal ribosomal protein uS11 family. In terms of assembly, part of the 30S ribosomal subunit. Interacts with proteins S7 and S18. Binds to IF-3.

Located on the platform of the 30S subunit, it bridges several disparate RNA helices of the 16S rRNA. Forms part of the Shine-Dalgarno cleft in the 70S ribosome. The sequence is that of Small ribosomal subunit protein uS11 from Phenylobacterium zucineum (strain HLK1).